The primary structure comprises 208 residues: Interleukin-6 (208 aa).

The first 29 residues, 1-29 (MNSRFTSAFTPFAVSLGLLLVMTSAFPTP), serve as a signal peptide directing secretion. Residue Asn38 is glycosylated (N-linked (GlcNAc...) asparagine). Cys72 and Cys78 are disulfide-bonded. Ser81 carries the post-translational modification Phosphoserine. A disulfide bond links Cys101 and Cys111.

It belongs to the IL-6 superfamily. In terms of assembly, component of a hexamer of two molecules each of IL6, IL6R and IL6ST; first binds to IL6R to associate with the signaling subunit IL6ST. Interacts with IL6R (via the N-terminal ectodomain); this interaction may be affected by IL6R-binding with SORL1, hence decreasing IL6 cis signaling. Interacts with SORL1 (via the N-terminal ectodomain); this interaction leads to IL6 internalization and lysosomal degradation. May form a trimeric complex with the soluble SORL1 ectodomain and soluble IL6R receptor; this interaction might stabilize circulating IL6, hence promoting IL6 trans signaling.

The protein localises to the secreted. In terms of biological role, cytokine with a wide variety of biological functions in immunity, tissue regeneration, and metabolism. Binds to IL6R, then the complex associates to the signaling subunit IL6ST/gp130 to trigger the intracellular IL6-signaling pathway. The interaction with the membrane-bound IL6R and IL6ST stimulates 'classic signaling', whereas the binding of IL6 and soluble IL6R to IL6ST stimulates 'trans-signaling'. Alternatively, 'cluster signaling' occurs when membrane-bound IL6:IL6R complexes on transmitter cells activate IL6ST receptors on neighboring receiver cells. IL6 is a potent inducer of the acute phase response. Rapid production of IL6 contributes to host defense during infection and tissue injury, but excessive IL6 synthesis is involved in disease pathology. In the innate immune response, is synthesized by myeloid cells, such as macrophages and dendritic cells, upon recognition of pathogens through toll-like receptors (TLRs) at the site of infection or tissue injury. In the adaptive immune response, is required for the differentiation of B cells into immunoglobulin-secreting cells. Plays a major role in the differentiation of CD4(+) T cell subsets. Essential factor for the development of T follicular helper (Tfh) cells that are required for the induction of germinal-center formation. Required to drive naive CD4(+) T cells to the Th17 lineage. Also required for proliferation of myeloma cells and the survival of plasmablast cells. Functionally, acts as an essential factor in bone homeostasis and on vessels directly or indirectly by induction of VEGF, resulting in increased angiogenesis activity and vascular permeability. Induces, through 'trans-signaling' and synergistically with IL1B and TNF, the production of VEGF. Involved in metabolic controls, is discharged into the bloodstream after muscle contraction increasing lipolysis and improving insulin resistance. 'Trans-signaling' in central nervous system also regulates energy and glucose homeostasis. Mediates, through GLP-1, crosstalk between insulin-sensitive tissues, intestinal L cells and pancreatic islets to adapt to changes in insulin demand. Also acts as a myokine. Plays a protective role during liver injury, being required for maintenance of tissue regeneration. Also has a pivotal role in iron metabolism by regulating HAMP/hepcidin expression upon inflammation or bacterial infection. Through activation of IL6ST-YAP-NOTCH pathway, induces inflammation-induced epithelial regeneration. This is Interleukin-6 (IL6) from Bos taurus (Bovine).